Here is an 88-residue protein sequence, read N- to C-terminus: Small ribosomal subunit protein bS16 (88 aa).

The protein belongs to the bacterial ribosomal protein bS16 family.

The chain is Small ribosomal subunit protein bS16 from Baumannia cicadellinicola subsp. Homalodisca coagulata.